A 326-amino-acid chain; its full sequence is Transcription factor MYB16 (326 aa).

2 consecutive HTH myb-type domains span residues 9–61 and 62–116; these read KLGL…TNYL and RPDI…KKRL. DNA-binding regions (H-T-H motif) lie at residues 37–61 and 89–112; these read WRSLPEKAGLHRCGKSCRLRWTNYL and WSAIATHLPKRTDNEIKNYWNTHL. Disordered stretches follow at residues 197-217 and 280-299; these read NWTTKPHEDQQQLESPTSTVS and DRSFSGDKNETAGESSGGDC. A compositionally biased stretch (polar residues) spans 208–217; it reads QLESPTSTVS. Residues 280 to 290 show a composition bias toward basic and acidic residues; the sequence is DRSFSGDKNET.

Expressed in trichomes, epidermis and mesophyll cells of young leaves, stems, petals, sepals, carpels and stamens.

The protein resides in the nucleus. Involved in the control of epidermal cell morphogenesis in petals. Promotes unidirectional cell expansion once outgrowth has been initiated. Coordinately with WIN1/SHN1, participates in the regulation of cuticle biosynthesis and wax accumulation in reproductive organs and trichomes. Functions in cuticle nanoridge formation in petals and stamens, and in morphogenesis of petal conical cells and trichomes. Functions as a major regulator of cuticle formation in vegetative organs by regulating the cuticle biosynthesis genes CYP86A8/LCR and CER1. The chain is Transcription factor MYB16 from Arabidopsis thaliana (Mouse-ear cress).